A 410-amino-acid chain; its full sequence is Probable intron-encoded endonuclease bI1 (410 aa).

Positions 1-131 (MRLLKTHPIL…VLMMAIAFLG (131 aa)) are COB exon 1 encoded. The next 3 membrane-spanning stretches (helical) occupy residues 32 to 52 (FGSL…FLAM), 75 to 95 (GWLI…FVYL), and 112 to 132 (LLWS…FLGF). Residues 132-410 (FNGQKYMCFY…KKNYIVKVIK (279 aa)) are COB intron 1 encoded. Positions 196–286 (PFSGIYMIVN…LETLKPEYNI (91 aa)) constitute a GIY-YIG domain.

It to endonucleases of group I introns of fungi and phage. Post-translationally, the mature protein may arise from proteolytic cleavage of an in-frame translation of COB exon 1 plus intron 1, containing the bI1 open reading frame.

It localises to the mitochondrion. It is found in the membrane. Its function is as follows. Mitochondrial DNA endonuclease involved in intron homing. The sequence is that of Probable intron-encoded endonuclease bI1 (bI1) from Mycosarcoma maydis (Corn smut fungus).